Consider the following 487-residue polypeptide: Betaine aldehyde dehydrogenase (487 aa).

Ser-26, Ile-27, and Asp-93 together coordinate K(+). 150-152 serves as a coordination point for NAD(+); it reads GAW. Catalysis depends on Lys-162, which acts as the Charge relay system. NAD(+) is bound by residues 176 to 179 and 229 to 232; these read KPSE and SVPT. Leu-244 contributes to the K(+) binding site. Glu-250 acts as the Proton acceptor in catalysis. 3 residues coordinate NAD(+): Gly-252, Cys-284, and Glu-384. The Nucleophile role is filled by Cys-284. Cysteine sulfenic acid (-SOH) is present on Cys-284. Lys-454 and Gly-457 together coordinate K(+). Residue Glu-461 is the Charge relay system of the active site.

This sequence belongs to the aldehyde dehydrogenase family. In terms of assembly, dimer of dimers. Requires K(+) as cofactor.

It catalyses the reaction betaine aldehyde + NAD(+) + H2O = glycine betaine + NADH + 2 H(+). The protein operates within amine and polyamine biosynthesis; betaine biosynthesis via choline pathway; betaine from betaine aldehyde: step 1/1. In terms of biological role, involved in the biosynthesis of the osmoprotectant glycine betaine. Catalyzes the irreversible oxidation of betaine aldehyde to the corresponding acid. The protein is Betaine aldehyde dehydrogenase of Sinorhizobium fredii (strain NBRC 101917 / NGR234).